The primary structure comprises 724 residues: Solute carrier organic anion transporter family member 4C1 (724 aa).

Residues 1–105 are Cytoplasmic-facing; that stretch reads MKSAKGIENL…QCLQRCNTPG (105 aa). Phosphoserine is present on residues Ser-15, Ser-16, Ser-24, Ser-26, and Ser-28. Positions 24–71 are disordered; the sequence is SASPSQVEVSALSSDPQRENSQPQELQKPQEPQKSPEPSLPSAPPNVS. A compositionally biased stretch (polar residues) spans 25–38; the sequence is ASPSQVEVSALSSD. Low complexity predominate over residues 44–60; the sequence is SQPQELQKPQEPQKSPE. The helical transmembrane segment at 106-126 threads the bilayer; that stretch reads GFLLHYCLLAVTQGIVVNGLV. The Extracellular portion of the chain corresponds to 127–145; that stretch reads NISISTIEKRYEMKSSLTG. A helical membrane pass occupies residues 146 to 166; sequence LISSSYDISFCLLSLFVSFFG. Over 167–172 the chain is Cytoplasmic; sequence ERGHKP. A helical transmembrane segment spans residues 173 to 197; it reads RWLAFAAFMIGLGALVFSLPQFFSG. At 198–224 the chain is on the extracellular side; sequence EYKLGSLFEDTCVTTRNSTSCTSSTSS. Residues 225 to 254 form a helical membrane-spanning segment; the sequence is LSNYLYVFILGQLLLGAGGTPLYTLGTAFL. At 255-274 the chain is on the cytoplasmic side; it reads DDSVPTHKSSLYIGTGYAMS. A helical transmembrane segment spans residues 275–295; sequence ILGPAIGYVLGGQLLTIYVDV. Over 296 to 311 the chain is Extracellular; the sequence is AMGESTDITEDDPRWL. A helical membrane pass occupies residues 312-336; that stretch reads GAWWIGFLLSWIFAWSLIIPFSCFP. Residues 337-377 lie on the Cytoplasmic side of the membrane; sequence KHLPGTAEIQAGKTSQAHQSNSNADAKFGKSIKDFPAALKN. A helical membrane pass occupies residues 378–399; that stretch reads LMKNAVFMCLVLSTSSEALITT. Residues 400–419 are Extracellular-facing; sequence GFATFLPKFIENQFGLTSSF. The helical transmembrane segment at 420–443 threads the bilayer; that stretch reads AATLGGAVLIPGAALGQILGGFLV. Residues 444-447 are Cytoplasmic-facing; sequence SKFK. Residues 448–471 traverse the membrane as a helical segment; it reads MTCKNTMKFALFTSGVALTLSFVF. The Extracellular segment spans residues 472–580; it reads IYAKCGNEPF…ETHCAKLPIF (109 aa). A Kazal-like domain is found at 495–549; sequence GNLIAPCNANCNCLRSYYYPVCGDGVQYFSPCFAGCSNSVAHRKPKVYYNCSCIE. Intrachain disulfides connect Cys-501–Cys-530, Cys-507–Cys-526, and Cys-516–Cys-547. Residues 581-603 form a helical membrane-spanning segment; the sequence is LCIFFIVIIFTFMAGTPITVSIL. Over 604–612 the chain is Cytoplasmic; it reads RCVNHRQRS. A helical transmembrane segment spans residues 613–638; it reads LALGIQFMVLRLLGTIPGPIIFGFTI. Residues 639 to 672 lie on the Extracellular side of the membrane; it reads DSTCILWDINDCGIKGACRIYDNIKMAHMLVAIS. Residues 673 to 690 form a helical membrane-spanning segment; that stretch reads VTCKVITMFFNGFAIFLY. Topologically, residues 691 to 724 are cytoplasmic; that stretch reads KPPPSATDLSFHKENAVVTNVLAEQDLNKIVKEG.

It belongs to the organo anion transporter (TC 2.A.60) family.

Its subcellular location is the basolateral cell membrane. The enzyme catalyses estrone 3-sulfate(out) = estrone 3-sulfate(in). It catalyses the reaction L-thyroxine(out) = L-thyroxine(in). The catalysed reaction is 3,3',5-triiodo-L-thyronine(out) = 3,3',5-triiodo-L-thyronine(in). It carries out the reaction chenodeoxycholate(out) = chenodeoxycholate(in). The enzyme catalyses glycocholate(out) = glycocholate(in). It catalyses the reaction L-homoarginine(in) = L-homoarginine(out). The catalysed reaction is L-arginine(in) = L-arginine(out). It carries out the reaction N(omega),N(omega)-dimethyl-L-arginine(out) = N(omega),N(omega)-dimethyl-L-arginine(in). Mediates the transport of organic anions such as steroids (estrone 3-sulfate, chenodeoxycholate, glycocholate) and thyroid hormones (3,3',5-triiodo-L-thyronine (T3), L-thyroxine (T4)), in the kidney. Capable of transporting cAMP and pharmacological substances such as digoxin, ouabain and methotrexate. Transport is independent of sodium, chloride ion, and ATP. Transport activity is stimulated by an acidic extracellular environment due to increased substrate affinity to the transporter. The driving force for this transport activity is currently not known. The role of hydrogencarbonate (HCO3(-), bicarbonate) as the probable counteranion that exchanges for organic anions is still not well defined. Functions as an uptake transporter at the apical membrane, suggesting a role in renal reabsorption. Involved in the renal secretion of the uremic toxin ADMA (N(omega),N(omega)-dimethyl-L-arginine or asymmetrical dimethylarginine), which is associated to cardiovascular events and mortality, and the structurally related amino acids L-arginine and L-homoarginine (a cardioprotective biomarker). Can act bidirectionally, suggesting a dual protective role of this transport protein; exporting L-homoarginine after being synthesized in proximal tubule cells, and mediating uptake of ADMA from the blood into proximal tubule cells where it is degraded by the enzyme dimethylarginine dimethylaminohydrolase 1 (DDAH1). May be involved in sperm maturation by enabling directed movement of organic anions and compounds within or between cells. This ion-transporting process is important to maintain the strict epididymal homeostasis necessary for sperm maturation. May have a role in secretory functions since seminal vesicle epithelial cells are assumed to secrete proteins involved in decapacitation by modifying surface proteins to facilitate the acquisition of the ability to fertilize the egg. The chain is Solute carrier organic anion transporter family member 4C1 from Pongo abelii (Sumatran orangutan).